A 214-amino-acid polypeptide reads, in one-letter code: Ribonuclease HII (214 aa).

Residues 26 to 214 (EIVCGVDEAG…PVREAFDLIR (189 aa)) enclose the RNase H type-2 domain. Positions 32, 33, and 124 each coordinate a divalent metal cation.

The protein belongs to the RNase HII family. Mn(2+) serves as cofactor. Requires Mg(2+) as cofactor.

The protein resides in the cytoplasm. The enzyme catalyses Endonucleolytic cleavage to 5'-phosphomonoester.. In terms of biological role, endonuclease that specifically degrades the RNA of RNA-DNA hybrids. In Burkholderia mallei (strain NCTC 10247), this protein is Ribonuclease HII.